A 497-amino-acid polypeptide reads, in one-letter code: UDP-N-acetylmuramoyl-L-alanyl-D-glutamate--2,6-diaminopimelate ligase (497 aa).

L27 and S29 together coordinate UDP-N-acetyl-alpha-D-muramoyl-L-alanyl-D-glutamate. Residue 116–122 (GTNGKTT) coordinates ATP. Residues N157, 158–159 (TT), S185, Q191, and R193 contribute to the UDP-N-acetyl-alpha-D-muramoyl-L-alanyl-D-glutamate site. N6-carboxylysine is present on K225. Meso-2,6-diaminopimelate-binding positions include R392, 416 to 419 (DNPR), G467, and E471. The Meso-diaminopimelate recognition motif motif lies at 416 to 419 (DNPR).

The protein belongs to the MurCDEF family. MurE subfamily. Mg(2+) serves as cofactor. Carboxylation is probably crucial for Mg(2+) binding and, consequently, for the gamma-phosphate positioning of ATP.

It localises to the cytoplasm. It carries out the reaction UDP-N-acetyl-alpha-D-muramoyl-L-alanyl-D-glutamate + meso-2,6-diaminopimelate + ATP = UDP-N-acetyl-alpha-D-muramoyl-L-alanyl-gamma-D-glutamyl-meso-2,6-diaminopimelate + ADP + phosphate + H(+). The protein operates within cell wall biogenesis; peptidoglycan biosynthesis. Its function is as follows. Catalyzes the addition of meso-diaminopimelic acid to the nucleotide precursor UDP-N-acetylmuramoyl-L-alanyl-D-glutamate (UMAG) in the biosynthesis of bacterial cell-wall peptidoglycan. In Buchnera aphidicola subsp. Schizaphis graminum (strain Sg), this protein is UDP-N-acetylmuramoyl-L-alanyl-D-glutamate--2,6-diaminopimelate ligase.